The following is a 218-amino-acid chain: Chromophore lyase CpcT/CpeT 1 (218 aa).

This sequence belongs to the CpcT/CpeT biliprotein lyase family.

Covalently attaches a chromophore to Cys residue(s) of phycobiliproteins. This is Chromophore lyase CpcT/CpeT 1 from Synechococcus sp. (strain JA-3-3Ab) (Cyanobacteria bacterium Yellowstone A-Prime).